The sequence spans 75 residues: MQVKKIKKRKKVNFFQKNNIKYIDYKDVELLKKFISPNGQILPRRITGTSLKDQRQLALAIKRARQMALLPYVIE.

Belongs to the bacterial ribosomal protein bS18 family. As to quaternary structure, part of the 30S ribosomal subunit. Forms a tight heterodimer with protein bS6.

Binds as a heterodimer with protein bS6 to the central domain of the 16S rRNA, where it helps stabilize the platform of the 30S subunit. The chain is Small ribosomal subunit protein bS18 from Mycoplasma capricolum subsp. capricolum (strain California kid / ATCC 27343 / NCTC 10154).